Reading from the N-terminus, the 308-residue chain is Elongation factor Ts (308 aa).

The interval threonine 80–valine 83 is involved in Mg(2+) ion dislocation from EF-Tu.

The protein belongs to the EF-Ts family.

The protein localises to the cytoplasm. Functionally, associates with the EF-Tu.GDP complex and induces the exchange of GDP to GTP. It remains bound to the aminoacyl-tRNA.EF-Tu.GTP complex up to the GTP hydrolysis stage on the ribosome. This Rhizobium etli (strain CIAT 652) protein is Elongation factor Ts.